The primary structure comprises 412 residues: Glutamate dehydrogenase (412 aa).

Residue lysine 102 is part of the active site.

The protein belongs to the Glu/Leu/Phe/Val dehydrogenases family. In terms of tissue distribution, in roots, stems, leaves and flowers but not in fruits.

It localises to the mitochondrion matrix. The enzyme catalyses L-glutamate + NAD(+) + H2O = 2-oxoglutarate + NH4(+) + NADH + H(+). It carries out the reaction L-glutamate + NADP(+) + H2O = 2-oxoglutarate + NH4(+) + NADPH + H(+). The chain is Glutamate dehydrogenase (GDH1) from Solanum lycopersicum (Tomato).